A 291-amino-acid polypeptide reads, in one-letter code: Protease HtpX homolog (291 aa).

Transmembrane regions (helical) follow at residues 4-24 and 38-58; these read VVLFLFTNLAVMLVLSVSARV and MGMLLLFAALIGFGGSFISLL. His-144 is a Zn(2+) binding site. Glu-145 is a catalytic residue. Zn(2+) is bound at residue His-148. 2 helical membrane passes run 159 to 179 and 199 to 219; these read LIQGVLNTFVIFLSRVIAYAI and ISSIIFEIMFGILASVVVMYF. Glu-224 is a binding site for Zn(2+).

The protein belongs to the peptidase M48B family. Requires Zn(2+) as cofactor.

Its subcellular location is the cell inner membrane. This Chlorobium phaeobacteroides (strain DSM 266 / SMG 266 / 2430) protein is Protease HtpX homolog.